Here is a 465-residue protein sequence, read N- to C-terminus: FAD-dependent monooxygenase penM (465 aa).

Residues 5-25 (QFHVIIVGGSIAGLTLAHCLH) form a helical membrane-spanning segment. FAD contacts are provided by Glu35, Gly49, Arg108, Asp299, and Ala312. Residues 435–455 (VLVLLLSALTWSCLGNMNIIM) form a helical membrane-spanning segment.

Belongs to the paxM FAD-dependent monooxygenase family. FAD is required as a cofactor.

Its subcellular location is the membrane. It functions in the pathway secondary metabolite biosynthesis. In terms of biological role, FAD-dependent monooxygenase; part of the gene cluster that mediates the biosynthesis of the indole diterpenes penitrems. The geranylgeranyl diphosphate (GGPP) synthase penG catalyzes the first step in penitrem biosynthesis via conversion of farnesyl pyrophosphate and isopentyl pyrophosphate into geranylgeranyl pyrophosphate (GGPP). Condensation of indole-3-glycerol phosphate with GGPP by the prenyl transferase penC then forms 3-geranylgeranylindole (3-GGI). Epoxidation by the FAD-dependent monooxygenase penM leads to a epoxidized-GGI that is substrate of the terpene cyclase penB for cyclization to yield paspaline. Paspaline is subsequently converted to 13-desoxypaxilline by the cytochrome P450 monooxygenase penP, the latter being then converted to paxilline by the cytochrome P450 monooxygenase penQ. Paxilline is converted to beta-paxitriol via C-10 ketoreduction by the short-chain dehydrogenase PC-15 which can be monoprenylated at the C-20 by the indole diterpene prenyltransferase penD. A two-step elimination (acetylation and elimination) process performed by the O-acetyltransferase PC-16 and the P.simplicissimum ptmI-ortholog not yet identified in P.crustosum, leads to the production of the prenylated form of penijanthine. The FAD-linked oxidoreductase ptmO then converts the prenylated form of penijanthine into PC-M5 which is in turn transformed into PC-M4 by the aromatic dimethylallyltransferase PC-22. A series of oxidation steps involving 4 cytochrome P450 monooxygenases (PC-21, PC-05, PC-23, PC-20) and a FAD-dependent monooxygenase (PC-14) are required for the transformation of PC-M4 to penitrems A and E. Synthesis of these final products is proposed to proceed via penitrems D and C (PC-21, PC-05, PC-14) and penitrems B and F (PC-21, PC-05, PC-14, PC-23). This Penicillium crustosum (Blue mold fungus) protein is FAD-dependent monooxygenase penM.